Consider the following 479-residue polypeptide: Cyclin-dependent kinase F-1 (479 aa).

The Protein kinase domain occupies tyrosine 21–leucine 418. Residues valine 27–valine 35 and lysine 50 each bind ATP. Tyrosine 32 is modified (phosphotyrosine). The active-site Proton acceptor is the aspartate 146. Residues serine 179, serine 208, and serine 247 each carry the phosphoserine modification. Residues lysine 187–methionine 221 are disordered. Threonine 290 bears the Phosphothreonine mark. The segment at proline 434 to proline 479 is disordered. Residues aspartate 442 to aspartate 454 are compositionally biased toward basic and acidic residues. Over residues lysine 468–proline 479 the composition is skewed to polar residues.

Belongs to the protein kinase superfamily. CMGC Ser/Thr protein kinase family. CDC2/CDKX subfamily. In terms of tissue distribution, highly expressed in suspension cell culture. Expressed at low levels in all plant organs.

It catalyses the reaction L-seryl-[protein] + ATP = O-phospho-L-seryl-[protein] + ADP + H(+). The enzyme catalyses L-threonyl-[protein] + ATP = O-phospho-L-threonyl-[protein] + ADP + H(+). It carries out the reaction [DNA-directed RNA polymerase] + ATP = phospho-[DNA-directed RNA polymerase] + ADP + H(+). Its function is as follows. CDK-activating kinase that modulates CDKD-2 and CDKD-3 activities by phosphorylation of the T-loop. Activates CDKD-2 C-terminal domain (CTD) kinase activity. Activates CDKA-1 probably by phosphorylation. Possesses a CDK kinase activity independently of association with cyclin CYCH1-1. Phosphorylates the CTD of the large subunit of RNA polymerase II. The sequence is that of Cyclin-dependent kinase F-1 (CDKF-1) from Arabidopsis thaliana (Mouse-ear cress).